The following is a 449-amino-acid chain: Tubulin alpha chain (449 aa).

The MREC motif signature appears at 1 to 4; sequence MREC. Residue Gln11 coordinates GTP. Residue Lys40 is modified to N6-acetyllysine. GTP contacts are provided by Glu71, Ser140, Gly144, Thr145, Thr179, Asn206, and Asn228. Residue Glu71 participates in Mg(2+) binding. Glu254 is an active-site residue. A 5-glutamyl polyglutamate modification is found at Glu443.

Belongs to the tubulin family. In terms of assembly, dimer of alpha and beta chains. A typical microtubule is a hollow water-filled tube with an outer diameter of 25 nm and an inner diameter of 15 nM. Alpha-beta heterodimers associate head-to-tail to form protofilaments running lengthwise along the microtubule wall with the beta-tubulin subunit facing the microtubule plus end conferring a structural polarity. Microtubules usually have 13 protofilaments but different protofilament numbers can be found in some organisms and specialized cells. Mg(2+) serves as cofactor. Some glutamate residues at the C-terminus are polyglycylated, resulting in polyglycine chains on the gamma-carboxyl group. Glycylation is mainly limited to tubulin incorporated into axonemes (cilia and flagella) whereas glutamylation is prevalent in neuronal cells, centrioles, axonemes, and the mitotic spindle. Both modifications can coexist on the same protein on adjacent residues, and lowering polyglycylation levels increases polyglutamylation, and reciprocally. The precise function of polyglycylation is still unclear. Post-translationally, some glutamate residues at the C-terminus are polyglutamylated, resulting in polyglutamate chains on the gamma-carboxyl group. Polyglutamylation plays a key role in microtubule severing by spastin (SPAST). SPAST preferentially recognizes and acts on microtubules decorated with short polyglutamate tails: severing activity by SPAST increases as the number of glutamates per tubulin rises from one to eight, but decreases beyond this glutamylation threshold. In terms of processing, acetylation of alpha chains at Lys-40 is located inside the microtubule lumen. This modification has been correlated with increased microtubule stability, intracellular transport and ciliary assembly. Undergoes a tyrosination/detyrosination cycle, the cyclic removal and re-addition of a C-terminal tyrosine residue by the enzymes tubulin tyrosine carboxypeptidase (MATCAP1, VASH1 or VASH2) and tubulin tyrosine ligase (TTL), respectively. Post-translationally, tyrosination promotes microtubule interaction with CAP-Gly microtubule plus-end tracking proteins. Tyrosinated tubulins regulate the initiation of dynein-driven motility. In terms of processing, detyrosination is involved in metaphase plate congression by guiding chromosomes during mitosis. Detyrosination increases microtubules-dependent mechanotransduction in dystrophic cardiac and skeletal muscle. In cardiomyocytes, detyrosinated microtubules are required to resist to contractile compression during contraction.

Its subcellular location is the cytoplasm. The protein localises to the cytoskeleton. It carries out the reaction GTP + H2O = GDP + phosphate + H(+). Its function is as follows. Tubulin is the major constituent of microtubules, a cylinder consisting of laterally associated linear protofilaments composed of alpha- and beta-tubulin heterodimers. Microtubules grow by the addition of GTP-tubulin dimers to the microtubule end, where a stabilizing cap forms. Below the cap, tubulin dimers are in GDP-bound state, owing to GTPase activity of alpha-tubulin. In Xenopus tropicalis (Western clawed frog), this protein is Tubulin alpha chain (tuba).